We begin with the raw amino-acid sequence, 317 residues long: MSRPFASAPARGHRQGQEERERRSEEGGSVPGPRTFQVVSPVVTPGQEATLFRVEAVEEGEARHEGDVAGIGREFQLLAEDIVEEVEVVADEEQEQRPSQELEEKTVEEQGQERPGGPCERQELDALQALAALQVELSSEREQNRRAYVQFMRKNHQRRKRHLARRSTIIQGIPGFWAKAIMSHPQVSVLISDQDQDFLGYMMDLKVQVRSHPPSRCKLIFSFRDNPYFLNSVIIKEYYLDITGYRARRSTPVHWFWDFERGAPSRRRDTRSLNFLNWLSGHNGPESNRIAEIISEDVWDDPLKYYLREEGSSVRDN.

Disordered regions lie at residues 1-39 and 91-118; these read MSRPFASAPARGHRQGQEERERRSEEGGSVPGPRTFQVV and DEEQEQRPSQELEEKTVEEQGQERPGGP. Composition is skewed to basic and acidic residues over residues 15–26 and 95–112; these read QGQEERERRSEE and EQRPSQELEEKTVEEQGQ.

It belongs to the nucleosome assembly protein (NAP) family. Post-translationally, phosphorylated. In terms of tissue distribution, testis. Probably in spermatogonia.

The protein resides in the cytoplasm. The protein localises to the nucleus. Its function is as follows. May be involved in sperm differentiation and proliferation. This Bos taurus (Bovine) protein is Testis-specific Y-encoded protein 1 (TSPY1).